We begin with the raw amino-acid sequence, 189 residues long: Transmembrane protein 229b (189 aa).

Over 1–17 (MATTVTPEPLTALSRWY) the chain is Cytoplasmic. Residues 18 to 38 (LYAIHGYFCEVMFTAAWEFVV) form a helical membrane-spanning segment. Residues 39-43 (NCNWK) are Extracellular-facing. A helical transmembrane segment spans residues 44 to 64 (FPGVTSVWALFIYGTCILIVE). Over 65-75 (RMYLCLKDRCN) the chain is Cytoplasmic. A helical membrane pass occupies residues 76 to 96 (VLLRCIIYTLWTYFWEFGTGF). The Extracellular segment spans residues 97 to 114 (LLRQFNACPWDYSEFKYN). A helical transmembrane segment spans residues 115–135 (FMGLITAEYAVPWFCASFIVE). Topologically, residues 136–189 (RLVIRNTLRLRFDEVAESGQAEERLDRGGGGRGGRRGRGARAGATSANGYVKVD) are cytoplasmic. The tract at residues 158 to 189 (ERLDRGGGGRGGRRGRGARAGATSANGYVKVD) is disordered.

It belongs to the TMEM229 family.

The protein localises to the membrane. The chain is Transmembrane protein 229b (tmem229b) from Danio rerio (Zebrafish).